We begin with the raw amino-acid sequence, 193 residues long: Activity-regulated cytoskeleton associated protein 2 (193 aa).

The protein belongs to the ARC/ARG3.1 family. In terms of assembly, homooligomer; homooligomerizes into virion-like capsids.

It is found in the extracellular vesicle membrane. Its function is as follows. Self-assembles into virion-like capsids that encapsulate RNAs and mediate intercellular RNA transfer. Arc2 protein is released from cells in extracellular vesicles that mediate the transfer of mRNA into neighboring cells. This Drosophila melanogaster (Fruit fly) protein is Activity-regulated cytoskeleton associated protein 2.